Consider the following 251-residue polypeptide: Phosphate import ATP-binding protein PstB (251 aa).

The ABC transporter domain maps to 5–246; it reads IKIRGVNFFY…PRDKRTEDYI (242 aa). 37 to 44 lines the ATP pocket; sequence GPSGCGKS.

The protein belongs to the ABC transporter superfamily. Phosphate importer (TC 3.A.1.7) family. As to quaternary structure, the complex is composed of two ATP-binding proteins (PstB), two transmembrane proteins (PstC and PstA) and a solute-binding protein (PstS).

The protein localises to the cell membrane. It catalyses the reaction phosphate(out) + ATP + H2O = ADP + 2 phosphate(in) + H(+). Part of the ABC transporter complex PstSACB involved in phosphate import. Responsible for energy coupling to the transport system. The chain is Phosphate import ATP-binding protein PstB from Dehalococcoides mccartyi (strain CBDB1).